A 272-amino-acid polypeptide reads, in one-letter code: 2-amino-3,7-dideoxy-D-threo-hept-6-ulosonate synthase (272 aa).

Asp-33 functions as the Proton acceptor in the catalytic mechanism. 1-deoxy-D-threo-hexo-2,5-diulose 6-phosphate contacts are provided by residues 33–37 (DHGVS) and 153–155 (YPR). Residue Tyr-153 is the Proton donor of the active site. Lys-184 (schiff-base intermediate with substrate) is an active-site residue. 1-deoxy-D-threo-hexo-2,5-diulose 6-phosphate is bound by residues 209 to 210 (GG) and 237 to 238 (GR).

This sequence belongs to the DeoC/FbaB aldolase family. ADHS subfamily. As to quaternary structure, homodecamer.

The catalysed reaction is 1-deoxy-D-threo-hexo-2,5-diulose 6-phosphate + L-aspartate 4-semialdehyde = 2,3-dioxopropyl phosphate + 2-amino-2,3,7-trideoxy-D-lyxo-hept-6-ulosonate. Functionally, catalyzes a transaldol reaction between 6-deoxy-5-ketofructose 1-phosphate (DKFP) and L-aspartate semialdehyde (ASA) with an elimination of hydroxypyruvaldehyde phosphate to yield 2-amino-3,7-dideoxy-D-threo-hept-6-ulosonate (ADH). Plays a key role in an alternative pathway of the biosynthesis of 3-dehydroquinate (DHQ), which is involved in the canonical pathway for the biosynthesis of aromatic amino acids and which is also a precursor for the biosynthesis of p-aminobenzoic acid (PABA) in M.maripaludis. Does not possess fructose-bisphosphate (FBP) aldolase activity. The polypeptide is 2-amino-3,7-dideoxy-D-threo-hept-6-ulosonate synthase (Methanococcus maripaludis (strain DSM 14266 / JCM 13030 / NBRC 101832 / S2 / LL)).